The chain runs to 1201 residues: DNA-directed RNA polymerase subunit beta' (1201 aa).

Zn(2+) is bound by residues Cys60, Cys62, Cys75, and Cys78. Mg(2+)-binding residues include Asp449, Asp451, and Asp453. Residues Cys818, Cys892, Cys899, and Cys902 each contribute to the Zn(2+) site.

The protein belongs to the RNA polymerase beta' chain family. As to quaternary structure, the RNAP catalytic core consists of 2 alpha, 1 beta, 1 beta' and 1 omega subunit. When a sigma factor is associated with the core the holoenzyme is formed, which can initiate transcription. Requires Mg(2+) as cofactor. The cofactor is Zn(2+).

The enzyme catalyses RNA(n) + a ribonucleoside 5'-triphosphate = RNA(n+1) + diphosphate. DNA-dependent RNA polymerase catalyzes the transcription of DNA into RNA using the four ribonucleoside triphosphates as substrates. This chain is DNA-directed RNA polymerase subunit beta', found in Listeria monocytogenes serovar 1/2a (strain ATCC BAA-679 / EGD-e).